The chain runs to 183 residues: Inner membrane-spanning protein YciB (183 aa).

5 helical membrane passes run 22–42 (IYAA…ITYL), 50–70 (MHLA…FFHD), 72–92 (AFIK…LIAS), 118–138 (VTWY…YIAF), and 148–168 (FKVF…VVYL).

Belongs to the YciB family.

The protein resides in the cell inner membrane. Plays a role in cell envelope biogenesis, maintenance of cell envelope integrity and membrane homeostasis. This Shewanella frigidimarina (strain NCIMB 400) protein is Inner membrane-spanning protein YciB.